The chain runs to 491 residues: Protein LDB17 (491 aa).

A Phosphoserine modification is found at Ser7. Residues 413–491 (ETPSTPSDGG…PPSRKCGTPK (79 aa)) are disordered. The segment covering 414-435 (TPSTPSDGGSSVSSNNTSRNSS) has biased composition (low complexity). Residues Ser463 and Ser466 each carry the phosphoserine modification. The segment covering 474–484 (APPPPPPPPPS) has biased composition (pro residues).

The protein belongs to the LDB17 family.

The protein localises to the cytoplasm. The protein resides in the bud. Its subcellular location is the bud neck. In terms of biological role, may be involved in protein-linked oligosaccharide phosphorylation since the deletion reduces the negative charge of the cell surface. The protein is Protein LDB17 (LDB17) of Saccharomyces cerevisiae (strain ATCC 204508 / S288c) (Baker's yeast).